The sequence spans 457 residues: Adenylosuccinate synthetase isozyme 2 A (457 aa).

Residues 40–46 (GDEGKGK) and 68–70 (GHT) each bind GTP. Asp41 serves as the catalytic Proton acceptor. 2 residues coordinate Mg(2+): Asp41 and Gly68. Asp41 contacts substrate. IMP-binding positions include 41 to 44 (DEGK), 66 to 69 (NAGH), Thr163, Arg177, Asn256, Thr271, and Arg335. Residue His69 is the Proton donor of the active site. A substrate-binding site is contributed by 331–337 (VTTGRKR). Residues Arg337, 363–365 (KLD), and 445–448 (GVGK) contribute to the GTP site.

Belongs to the adenylosuccinate synthetase family. Homodimer. Mg(2+) serves as cofactor.

The protein localises to the cytoplasm. It is found in the mitochondrion. It catalyses the reaction IMP + L-aspartate + GTP = N(6)-(1,2-dicarboxyethyl)-AMP + GDP + phosphate + 2 H(+). The protein operates within purine metabolism; AMP biosynthesis via de novo pathway; AMP from IMP: step 1/2. Its activity is regulated as follows. Inhibited competitively by AMP and IMP and non-competitively by fructose 1,6-bisphosphate. Its function is as follows. Plays an important role in the de novo pathway and in the salvage pathway of purine nucleotide biosynthesis. Catalyzes the first committed step in the biosynthesis of AMP from IMP. This is Adenylosuccinate synthetase isozyme 2 A (adss2-a) from Xenopus tropicalis (Western clawed frog).